Here is a 216-residue protein sequence, read N- to C-terminus: Adenylate kinase (216 aa).

ATP is bound at residue 10–15 (GAGKGT). Residues 30 to 59 (STGDMLRAAVKAGTPLGLELKKVMDAGQLV) are NMP. Residues T31, R36, 57–59 (QLV), 85–88 (GFPR), and Q92 each bind AMP. The interval 122–159 (GRRVHLASGRTYHIQYNPPKVEGKDDVTGEDLIQRDDD) is LID. ATP contacts are provided by residues R123 and 132–133 (TY). Positions 156 and 167 each coordinate AMP. G202 contributes to the ATP binding site.

The protein belongs to the adenylate kinase family. In terms of assembly, monomer.

The protein resides in the cytoplasm. It carries out the reaction AMP + ATP = 2 ADP. Its pathway is purine metabolism; AMP biosynthesis via salvage pathway; AMP from ADP: step 1/1. Catalyzes the reversible transfer of the terminal phosphate group between ATP and AMP. Plays an important role in cellular energy homeostasis and in adenine nucleotide metabolism. This is Adenylate kinase from Pseudomonas putida (strain GB-1).